The sequence spans 330 residues: Phosphate acyltransferase (330 aa).

Belongs to the PlsX family. In terms of assembly, homodimer. Probably interacts with PlsY.

The protein localises to the cytoplasm. The catalysed reaction is a fatty acyl-[ACP] + phosphate = an acyl phosphate + holo-[ACP]. The protein operates within lipid metabolism; phospholipid metabolism. Catalyzes the reversible formation of acyl-phosphate (acyl-PO(4)) from acyl-[acyl-carrier-protein] (acyl-ACP). This enzyme utilizes acyl-ACP as fatty acyl donor, but not acyl-CoA. This chain is Phosphate acyltransferase, found in Bacillus cereus (strain B4264).